A 122-amino-acid polypeptide reads, in one-letter code: Large ribosomal subunit protein uL14 (122 aa).

Belongs to the universal ribosomal protein uL14 family. In terms of assembly, part of the 50S ribosomal subunit. Forms a cluster with proteins L3 and L19. In the 70S ribosome, L14 and L19 interact and together make contacts with the 16S rRNA in bridges B5 and B8.

Its function is as follows. Binds to 23S rRNA. Forms part of two intersubunit bridges in the 70S ribosome. This is Large ribosomal subunit protein uL14 from Thermus aquaticus.